We begin with the raw amino-acid sequence, 1568 residues long: Kielin/chordin-like protein (1568 aa).

Positions 1 to 23 (MAGVGAAALSLLLHLGALALAAG) are cleaved as a signal peptide. The interval 27-49 (GAVPREPPGQQTTAHSSVLAGNS) is disordered. Residues 35–49 (GQQTTAHSSVLAGNS) are compositionally biased toward polar residues. A coiled-coil region spans residues 60–87 (LGRLEAAVMELREQNKDLQTRVRQLESC). 16 VWFC domains span residues 136–193 (RGCS…PICR), 194–253 (PGCD…PTCQ), 253–312 (QGCT…PVCD), 312–370 (DGCF…PVCD), 426–485 (PACE…PSCD), 485–544 (DSCT…PRCP), 544–602 (PDCI…NDCS), 602–661 (SGCA…PQCP), 667–725 (AGCP…PSCD), 725–782 (DGCL…PDCD), 782–841 (DGCE…PTCQ), 900–959 (HSCL…PRCR), 959–1017 (RGCL…PQCS), 1017–1085 (SDCE…PTCA), 1082–1145 (PTCA…PVCR), and 1149–1209 (QSCV…PRCL). Asn340 is a glycosylation site (N-linked (GlcNAc...) asparagine). Asn499 carries an N-linked (GlcNAc...) asparagine glycan. The N-linked (GlcNAc...) asparagine glycan is linked to Asn1090. In terms of domain architecture, VWFD spans 1213 to 1389 (ASCMAFGDPH…EGLWPGRPCS (177 aa)). 2 disulfides stabilise this stretch: Cys1215–Cys1347 and Cys1237–Cys1388. The 61-residue stretch at 1483–1543 (CPLERGFVFD…EAHCIPPEAC (61 aa)) folds into the TIL domain.

Interacts with BMP7 and, by doing so, enhances binding to the type I receptors that contains cytoplasmic serine/threonine protein kinase domains. Also able to interact with activin-A and TGFB1.

Its subcellular location is the secreted. Its function is as follows. Enhances bone morphogenetic protein (BMP) signaling in a paracrine manner. In contrast, it inhibits both the activin-A and TGFB1-mediated signaling pathways. This is Kielin/chordin-like protein from Homo sapiens (Human).